We begin with the raw amino-acid sequence, 502 residues long: MAFKPKIPIALLLLTSLLAICAGLALAMQDPELKQCKHQCRHQRQFDEQEKEHCQRSCDEYHIEKKARERAERRRSEEGSSREEGYEEEELGGEREEENPYVFEDEDFETRVRTDEGRIQVLEKFTKRSKLLRGIENFRVAILEANPQTFISPAHFDAELVVFVAKGRATITTVREEKRENFNVEQGDIMRIPAGTPVYLINRDENEKLYIVKILRPVSVPGHFEAFHGSGGEDPESFYRAFSWEVLEAALKTRRDQLEKLFGKQTQGVIIKASKEQIRSMSKHEETTPRIWPFGGDSTHPFNLFHKRPSQSNQFGRLFETDPKECKQLQDLDLMVSFANITKGSMAGPYYNSRATKISVVIEGEGYFEMACPHLSSSGSRGQREGSGSSRRRSRSGPSYQQIRGRLRPGMVFVAPAGHPVAVIASRNKNLQVLCFDVNAQGNIRFPLAGKNNIVNEFEKEAKELAFNFPAREVEKIFRNQDQEFFFPGPSRQPEEGGRAFE.

The first 27 residues, 1 to 27, serve as a signal peptide directing secretion; that stretch reads MAFKPKIPIALLLLTSLLAICAGLALA. Residues 67 to 84 show a composition bias toward basic and acidic residues; that stretch reads ARERAERRRSEEGSSREE. A disordered region spans residues 67 to 100; the sequence is ARERAERRRSEEGSSREEGYEEEELGGEREEENP. Residues 85–100 show a composition bias toward acidic residues; the sequence is GYEEEELGGEREEENP. Cupin type-1 domains follow at residues 101-259 and 302-475; these read YVFE…DQLE and FNLF…REVE. N340 carries N-linked (GlcNAc...) asparagine glycosylation. The tract at residues 374 to 401 is disordered; that stretch reads HLSSSGSRGQREGSGSSRRRSRSGPSYQ. Residues 376–389 are compositionally biased toward low complexity; it reads SSSGSRGQREGSGS.

The protein belongs to the 7S seed storage protein family. Homotrimer. Post-translationally, N-glycosylated; paucimannose-type structures containing xylose. Expressed in seed (at protein level).

Its function is as follows. Seed storage protein. The chain is Vicilin Jug r 6.0101 from Juglans regia (English walnut).